Consider the following 667-residue polypeptide: UvrABC system protein B (667 aa).

The region spanning 31–414 (AGIESGEKEQ…EMDRTKHVVQ (384 aa)) is the Helicase ATP-binding domain. 44–51 (GATGTGKT) contributes to the ATP binding site. The short motif at 97–120 (YYDYYQPEAYVPSSDTYIEKDSAI) is the Beta-hairpin element. The Helicase C-terminal domain occupies 435 to 597 (QIDDLVGEIN…ITPHTIKKAI (163 aa)). Residues 630 to 665 (LDMISKLEEQMKTAAKKLDFEQAATLRDTVMELKAQ) enclose the UVR domain.

Belongs to the UvrB family. In terms of assembly, forms a heterotetramer with UvrA during the search for lesions. Interacts with UvrC in an incision complex.

The protein resides in the cytoplasm. Functionally, the UvrABC repair system catalyzes the recognition and processing of DNA lesions. A damage recognition complex composed of 2 UvrA and 2 UvrB subunits scans DNA for abnormalities. Upon binding of the UvrA(2)B(2) complex to a putative damaged site, the DNA wraps around one UvrB monomer. DNA wrap is dependent on ATP binding by UvrB and probably causes local melting of the DNA helix, facilitating insertion of UvrB beta-hairpin between the DNA strands. Then UvrB probes one DNA strand for the presence of a lesion. If a lesion is found the UvrA subunits dissociate and the UvrB-DNA preincision complex is formed. This complex is subsequently bound by UvrC and the second UvrB is released. If no lesion is found, the DNA wraps around the other UvrB subunit that will check the other stand for damage. This is UvrABC system protein B from Lactiplantibacillus plantarum (strain ATCC BAA-793 / NCIMB 8826 / WCFS1) (Lactobacillus plantarum).